Reading from the N-terminus, the 2209-residue chain is Orsellinic acid synthase armB (2209 aa).

An N-terminal acylcarrier protein transacylase domain (SAT) region spans residues Leu-38 to His-261. The region spanning Gln-391–Glu-817 is the Ketosynthase family 3 (KS3) domain. Catalysis depends on for beta-ketoacyl synthase activity residues Cys-561, His-696, and His-736. The tract at residues Val-914–Gln-1239 is malonyl-CoA:ACP transacylase (MAT) domain. Ser-1008 acts as the For acyl/malonyl transferase activity in catalysis. The segment at Met-1306–Asp-1436 is N-terminal hotdog fold. One can recognise a PKS/mFAS DH domain in the interval Met-1306–Gln-1613. Residues Ile-1335–Asn-1610 form a product template (PT) domain region. The active-site Proton acceptor; for dehydratase activity is the His-1338. Residues Ala-1463–Gln-1613 form a C-terminal hotdog fold region. Asp-1524 functions as the Proton donor; for dehydratase activity in the catalytic mechanism. 2 Carrier domains span residues Val-1659–Ile-1734 and Ser-1844–Gln-1921. Ser-1693 and Ser-1881 each carry O-(pantetheine 4'-phosphoryl)serine. Residues Ile-1917 to Leu-1945 form a disordered region. Acidic residues predominate over residues Ala-1932 to Ser-1943. The tract at residues Val-1962–Asp-2201 is thioesterase (TE) domain.

The enzyme catalyses 3 malonyl-CoA + acetyl-CoA + 2 H(+) = orsellinate + 3 CO2 + 4 CoA. Its pathway is secondary metabolite biosynthesis. Non-reducing polyketide synthase, part of the gene cluster that mediates the biosynthesis of melleolides, a range of antifungal and phytotoxic polyketide derivatives composed of an orsellinic acid (OA) moiety esterified to various sesquiterpene alcohols. The first step in melleolides biosynthesis is performed by the delta(6)-protoilludene synthase PRO1 which catalyzes the cyclization of farnesyl diphosphate to protoilludene. The orsellinic acid synthase armB produces OA by condensing acetyl-CoA with 3 malonyl-CoA units in a three-round chain elongation reaction folowed by a C2-C7 ring closure. ArmB further catalyzes the trans-esterification of OA to the various sesquiterpene alcohols resulting from the hydroxylation of protoilludene. The melleolides cluster also includes 5 cytochrome P450 monooxygenases, 4 NAD(+)-dependent oxidoreductases, one flavin-dependent oxidoreductase, and one O-methyltransferase. The cytochrome P450 monooxygenases may be involved in protoilludene hydroxylation to elaborate melleolides with multiple alcohol groups, such as melleolide D, which carries alcohol functionalities at C-4, C-5, C-10, and C-13. The role of the NAD(+)-dependent enzymes remains unknown. Numerous melleolides, including arnamial, show 5'-O-methylation of the aromatic moiety which may be catalyzed by the methyltransferase encoded in the cluster. The flavin-dependent oxidoreductase might represent the dehydrogenase yielding the aldehyde in position 1 of arnamial and other melleolides. Finally, several halogenase localized outside of the cluster (armH1 to armH5), are able to catalyze the transfer of a single chlorine atom to the melleolide backbone, resulting in a 6'-chloromelleolide product. This chain is Orsellinic acid synthase armB, found in Armillaria mellea (Honey mushroom).